The chain runs to 515 residues: ATP synthase subunit alpha (515 aa).

169-176 (GDRQTGKT) is an ATP binding site.

It belongs to the ATPase alpha/beta chains family. In terms of assembly, F-type ATPases have 2 components, CF(1) - the catalytic core - and CF(0) - the membrane proton channel. CF(1) has five subunits: alpha(3), beta(3), gamma(1), delta(1), epsilon(1). CF(0) has three main subunits: a(1), b(2) and c(9-12). The alpha and beta chains form an alternating ring which encloses part of the gamma chain. CF(1) is attached to CF(0) by a central stalk formed by the gamma and epsilon chains, while a peripheral stalk is formed by the delta and b chains.

The protein localises to the cell inner membrane. It carries out the reaction ATP + H2O + 4 H(+)(in) = ADP + phosphate + 5 H(+)(out). In terms of biological role, produces ATP from ADP in the presence of a proton gradient across the membrane. The alpha chain is a regulatory subunit. The sequence is that of ATP synthase subunit alpha from Myxococcus xanthus.